A 294-amino-acid polypeptide reads, in one-letter code: Ethanolamine ammonia-lyase small subunit (294 aa).

The adenosylcob(III)alamin site is built by V207 and E228.

The protein belongs to the EutC family. The basic unit is a heterodimer which dimerizes to form tetramers. The heterotetramers trimerize; 6 large subunits form a core ring with 6 small subunits projecting outwards. The cofactor is adenosylcob(III)alamin.

It localises to the bacterial microcompartment. It carries out the reaction ethanolamine = acetaldehyde + NH4(+). It functions in the pathway amine and polyamine degradation; ethanolamine degradation. Functionally, catalyzes the deamination of various vicinal amino-alcohols to oxo compounds. Allows this organism to utilize ethanolamine as the sole source of nitrogen and carbon in the presence of external vitamin B12. The protein is Ethanolamine ammonia-lyase small subunit of Clostridium tetani (strain Massachusetts / E88).